A 224-amino-acid chain; its full sequence is UPF0758 protein VS_0182 (224 aa).

Residues 1–21 (MPISKMPVESMPREKLLSRGP) are disordered. The region spanning 102 to 224 (ALTSPSHTKL…VISFAERGWI (123 aa)) is the MPN domain. Positions 173, 175, and 186 each coordinate Zn(2+). The JAMM motif signature appears at 173-186 (HNHPSGVAEPSQAD).

It belongs to the UPF0758 family.

This chain is UPF0758 protein VS_0182, found in Vibrio atlanticus (strain LGP32) (Vibrio splendidus (strain Mel32)).